We begin with the raw amino-acid sequence, 173 residues long: Lactoylglutathione lyase (173 aa).

The VOC domain maps to 24–170; the sequence is VFNHTMLRVK…DGYWVEVIQP (147 aa). Residue His-27 coordinates Ni(2+). Residue Arg-31 coordinates substrate. Glu-93 serves as a coordination point for Ni(2+). Substrate-binding residues include Asn-97, Arg-116, and His-120. The Ni(2+) site is built by His-120 and Glu-166. The active-site Proton donor/acceptor is Glu-166.

This sequence belongs to the glyoxalase I family. In terms of assembly, monomer. Requires Ni(2+) as cofactor. The cofactor is Zn(2+).

The catalysed reaction is (R)-S-lactoylglutathione = methylglyoxal + glutathione. The protein operates within secondary metabolite metabolism; methylglyoxal degradation; (R)-lactate from methylglyoxal: step 1/2. Functionally, catalyzes the conversion of hemimercaptal, formed from methylglyoxal and glutathione, to S-lactoylglutathione. This chain is Lactoylglutathione lyase (gloA), found in Pseudomonas putida (Arthrobacter siderocapsulatus).